The primary structure comprises 177 residues: MSRIGKKPVPVPQGVTANVDGQVVTAKGPKGELKFVVNDDVLVKLEDGAIAVDPRNESKMARSKWGMSRTQIANILTGVKDGFEKRLEINGVGYRAAMQGKNLQLSLGFSHDVSYEPPTGITITVPKPTEIVVSGIDKQVVGQVAAEIRKYRGPEPYKGKGVKYAGETIVRKEGKKK.

Belongs to the universal ribosomal protein uL6 family. Part of the 50S ribosomal subunit.

This protein binds to the 23S rRNA, and is important in its secondary structure. It is located near the subunit interface in the base of the L7/L12 stalk, and near the tRNA binding site of the peptidyltransferase center. This is Large ribosomal subunit protein uL6 from Chelativorans sp. (strain BNC1).